The sequence spans 555 residues: CTL-like protein DDB_G0274487 (555 aa).

Residues 1–17 (MGIEDNSQQPNTGSPYG) are compositionally biased toward polar residues. Positions 1 to 101 (MGIEDNSQQP…NLNKANDRES (101 aa)) are disordered. Positions 19 to 63 (SPPSQYNPYGQQPPQQQQYNPYGEQQQQPQQQQQYGYQPQFQPTY) are enriched in low complexity. Residues 79–90 (PFPPQQQQPPPI) show a composition bias toward pro residues. Residue Asn-116 is glycosylated (N-linked (GlcNAc...) asparagine). Residues 138–158 (IWFSILFGLNFGLLIVVSASA) form a helical membrane-spanning segment. An N-linked (GlcNAc...) asparagine glycan is attached at Asn-174. A run of 10 helical transmembrane segments spans residues 182–202 (FLFAILPFTIVFSLLYIWAWL), 210–230 (ESLIKYSFFGAMGLMIGYCVF), 231–251 (FFVWGAIYLGIIFAIMAFFII), 284–304 (AGYVSIFINFVWFIVWGSAFA), 313–333 (AIQTCINIYLVFTLYWVFHVI), 340–360 (TVSGLLATWYFCSGPNGVGMP), 372–392 (LTTSFGSICFGSLIISLIETL), 405–425 (VVVKIIGYIFNCILSMLSSIV), 472–492 (IAIGGLVASLLLSILGALISI), and 493–513 (PFDMSVYGGALALFIGYLVII).

The protein belongs to the CTL (choline transporter-like) family.

Its subcellular location is the membrane. The chain is CTL-like protein DDB_G0274487 from Dictyostelium discoideum (Social amoeba).